The sequence spans 250 residues: Coproheme decarboxylase (250 aa).

Residues R131, 145-149 (YPMNK), H172, and Q185 contribute to the Fe-coproporphyrin III site. Residue Y145 is part of the active site.

Belongs to the ChdC family. Type 1 subfamily. It depends on Fe-coproporphyrin III as a cofactor.

It catalyses the reaction Fe-coproporphyrin III + 2 H2O2 + 2 H(+) = heme b + 2 CO2 + 4 H2O. It carries out the reaction Fe-coproporphyrin III + H2O2 + H(+) = harderoheme III + CO2 + 2 H2O. The catalysed reaction is harderoheme III + H2O2 + H(+) = heme b + CO2 + 2 H2O. The protein operates within porphyrin-containing compound metabolism; protoheme biosynthesis. Involved in coproporphyrin-dependent heme b biosynthesis. Catalyzes the decarboxylation of Fe-coproporphyrin III (coproheme) to heme b (protoheme IX), the last step of the pathway. The reaction occurs in a stepwise manner with a three-propionate intermediate. The sequence is that of Coproheme decarboxylase from Staphylococcus aureus (strain USA300 / TCH1516).